Here is a 231-residue protein sequence, read N- to C-terminus: Orotidine 5'-phosphate decarboxylase (231 aa).

Residues D9, K34, 62–71 (DLKLHDIPSV), T117, R179, Q188, G208, and R209 contribute to the substrate site. K64 acts as the Proton donor in catalysis.

This sequence belongs to the OMP decarboxylase family. Type 1 subfamily. Homodimer.

It carries out the reaction orotidine 5'-phosphate + H(+) = UMP + CO2. It functions in the pathway pyrimidine metabolism; UMP biosynthesis via de novo pathway; UMP from orotate: step 2/2. In terms of biological role, catalyzes the decarboxylation of orotidine 5'-monophosphate (OMP) to uridine 5'-monophosphate (UMP). The polypeptide is Orotidine 5'-phosphate decarboxylase (Aquifex aeolicus (strain VF5)).